The sequence spans 262 residues: 3-dehydro-D-guloside 4-epimerase (262 aa).

Catalysis depends on glutamate 146, which acts as the Proton donor/acceptor. 2 residues coordinate Mn(2+): glutamate 146 and aspartate 179. Histidine 182 contacts substrate. Histidine 205 provides a ligand contact to Mn(2+). Arginine 211 is a binding site for substrate. Glutamate 240 serves as the catalytic Proton donor/acceptor. Glutamate 240 contributes to the Mn(2+) binding site.

This sequence belongs to the hyi family. Requires Mn(2+) as cofactor.

The catalysed reaction is a 3-dehydro-D-guloside = a 3-dehydro-D-glucoside. Functionally, catalyzes the epimerization at C4 of 3-dehydro-D-gulosides leading to 3-dehydro-D-glucosides. Probably functions in a metabolic pathway that transforms D-gulosides to D-glucosides. Can use methyl alpha-3-dehydro-D-glucoside and methyl beta-3-dehydro-D-glucoside as substrates in vitro. However, the actual specific physiological substrates for this metabolic pathway are unknown. Cannot act on D-psicose, D-fructose, D-tagatose, D-sorbose, L-xylulose, or L-ribulose. This chain is 3-dehydro-D-guloside 4-epimerase (ycjR), found in Escherichia coli (strain K12).